A 232-amino-acid chain; its full sequence is Small ribosomal subunit protein uS2 (232 aa).

The protein belongs to the universal ribosomal protein uS2 family.

The protein is Small ribosomal subunit protein uS2 of Desulforamulus reducens (strain ATCC BAA-1160 / DSM 100696 / MI-1) (Desulfotomaculum reducens).